Consider the following 71-residue polypeptide: Small ribosomal subunit protein bS21 (71 aa).

It belongs to the bacterial ribosomal protein bS21 family.

This Hydrogenovibrio crunogenus (strain DSM 25203 / XCL-2) (Thiomicrospira crunogena) protein is Small ribosomal subunit protein bS21.